Reading from the N-terminus, the 341-residue chain is Elongation factor Ts (341 aa).

The tract at residues 80 to 83 (TDFV) is involved in Mg(2+) ion dislocation from EF-Tu.

This sequence belongs to the EF-Ts family.

It is found in the cytoplasm. Associates with the EF-Tu.GDP complex and induces the exchange of GDP to GTP. It remains bound to the aminoacyl-tRNA.EF-Tu.GTP complex up to the GTP hydrolysis stage on the ribosome. This chain is Elongation factor Ts, found in Lactobacillus acidophilus (strain ATCC 700396 / NCK56 / N2 / NCFM).